Consider the following 164-residue polypeptide: D-aminoacyl-tRNA deacylase (164 aa).

TRNA contacts are provided by Trp-72 and Phe-89. Thr-90 functions as the Nucleophile in the catalytic mechanism. A C-terminal adenosine nucleotide of tRNA motif is present at residues His-104 to Lys-107. Residues Gly-149–Pro-150 carry the Gly-cisPro motif, allows the protein to recognize chirality of D-amino acids motif.

It belongs to the DTD family. Homodimer.

It is found in the cytoplasm. The enzyme catalyses glycyl-tRNA(Ala) + H2O = tRNA(Ala) + glycine + H(+). It carries out the reaction a D-aminoacyl-tRNA + H2O = a tRNA + a D-alpha-amino acid + H(+). The catalysed reaction is D-tyrosyl-tRNA(Tyr) + H2O = D-tyrosine + tRNA(Tyr). Functionally, D-aminoacyl-tRNA deacylase, with no observable activity on tRNAs charged with their cognate L-amino acid. Probably acts by rejecting L-amino acids from its binding site rather than specific recognition of D-amino acids. Catalyzes the hydrolysis of D-tyrosyl-tRNA(Tyr), has no activity on correctly charged L-tyrosyl-tRNA(Tyr). Hydrolyzes correctly charged, achiral, glycyl-tRNA(Gly). Deacylates mischarged D.melanogaster and E.coli glycyl-tRNA(Ala). Probably acts via tRNA-based rather than protein-based catalysis. Acts on tRNAs only when the D-amino acid is either attached to the ribose 3'-OH or transferred to the 3'-OH from the 2'-OH through rapid transesterification. Binds a number of other D-amino acids (D-Arg, D-Glu, D-His, D-Lys, D-Ser), suggesting it may also deacylate other mischarged tRNAs. The polypeptide is D-aminoacyl-tRNA deacylase (Plasmodium falciparum (isolate 3D7)).